The following is a 217-amino-acid chain: Adenylate kinase (217 aa).

Residue 10 to 15 coordinates ATP; it reads GAGKGT. Residues 30–59 form an NMP region; the sequence is STGDMFRAAMKEGTPLGLQAKEYIDRGDLV. Residues Thr-31, Arg-36, 57–59, 85–88, and Gln-92 contribute to the AMP site; these read DLV and GFPR. Positions 126–163 are LID; that stretch reads GRRICRNCGATYHLVFHPPAQPGVCDKCGGELYQRPDD. An ATP-binding site is contributed by Arg-127. Positions 130 and 133 each coordinate Zn(2+). 136–137 serves as a coordination point for ATP; the sequence is TY. Zn(2+) is bound by residues Cys-150 and Cys-153. Residues Arg-160 and Arg-171 each contribute to the AMP site. Gln-199 is an ATP binding site.

This sequence belongs to the adenylate kinase family. Monomer.

It localises to the cytoplasm. It catalyses the reaction AMP + ATP = 2 ADP. The protein operates within purine metabolism; AMP biosynthesis via salvage pathway; AMP from ADP: step 1/1. Catalyzes the reversible transfer of the terminal phosphate group between ATP and AMP. Plays an important role in cellular energy homeostasis and in adenine nucleotide metabolism. This chain is Adenylate kinase, found in Geobacillus thermodenitrificans (strain NG80-2).